The following is a 164-amino-acid chain: Protein-export protein SecB (164 aa).

This sequence belongs to the SecB family. Homotetramer, a dimer of dimers. One homotetramer interacts with 1 SecA dimer.

The protein localises to the cytoplasm. Its function is as follows. One of the proteins required for the normal export of preproteins out of the cell cytoplasm. It is a molecular chaperone that binds to a subset of precursor proteins, maintaining them in a translocation-competent state. It also specifically binds to its receptor SecA. The sequence is that of Protein-export protein SecB from Orientia tsutsugamushi (strain Ikeda) (Rickettsia tsutsugamushi).